The sequence spans 34 residues: Photosystem II reaction center protein Psb30 (34 aa).

Residues 5–25 traverse the membrane as a helical segment; sequence VLAQLTVLAFVIAVGPITLIW.

It belongs to the Psb30/Ycf12 family. As to quaternary structure, PSII is composed of 1 copy each of membrane proteins PsbA, PsbB, PsbC, PsbD, PsbE, PsbF, PsbH, PsbI, PsbJ, PsbK, PsbL, PsbM, PsbT, PsbX, PsbY, PsbZ, Psb30/Ycf12, peripheral proteins of the oxygen-evolving complex and a large number of cofactors. It forms dimeric complexes.

It localises to the plastid. The protein localises to the chloroplast thylakoid membrane. Functionally, a core subunit of photosystem II (PSII), probably helps stabilize the reaction center. This is Photosystem II reaction center protein Psb30 from Cyanidioschyzon merolae (strain NIES-3377 / 10D) (Unicellular red alga).